A 297-amino-acid chain; its full sequence is tRNA dimethylallyltransferase (297 aa).

Glycine 15–serine 22 lines the ATP pocket. Threonine 17–serine 22 contributes to the substrate binding site. Interaction with substrate tRNA stretches follow at residues aspartate 40–glutamine 43 and glutamine 164–arginine 168.

The protein belongs to the IPP transferase family. Monomer. Requires Mg(2+) as cofactor.

The enzyme catalyses adenosine(37) in tRNA + dimethylallyl diphosphate = N(6)-dimethylallyladenosine(37) in tRNA + diphosphate. Functionally, catalyzes the transfer of a dimethylallyl group onto the adenine at position 37 in tRNAs that read codons beginning with uridine, leading to the formation of N6-(dimethylallyl)adenosine (i(6)A). This chain is tRNA dimethylallyltransferase, found in Rhizobium leguminosarum bv. trifolii (strain WSM2304).